Reading from the N-terminus, the 142-residue chain is Galactose-6-phosphate isomerase subunit LacA (142 aa).

This sequence belongs to the LacAB/RpiB family. In terms of assembly, heteromultimeric protein consisting of LacA and LacB.

It carries out the reaction aldehydo-D-galactose 6-phosphate = keto-D-tagatose 6-phosphate. It functions in the pathway carbohydrate metabolism; D-galactose 6-phosphate degradation; D-tagatose 6-phosphate from D-galactose 6-phosphate: step 1/1. This is Galactose-6-phosphate isomerase subunit LacA from Clostridium acetobutylicum (strain ATCC 824 / DSM 792 / JCM 1419 / IAM 19013 / LMG 5710 / NBRC 13948 / NRRL B-527 / VKM B-1787 / 2291 / W).